The sequence spans 272 residues: Putative phosphoenolpyruvate synthase regulatory protein (272 aa).

Position 152–159 (152–159) interacts with ADP; that stretch reads GVSRCGKT.

This sequence belongs to the pyruvate, phosphate/water dikinase regulatory protein family. PSRP subfamily.

The catalysed reaction is [pyruvate, water dikinase] + ADP = [pyruvate, water dikinase]-phosphate + AMP + H(+). It carries out the reaction [pyruvate, water dikinase]-phosphate + phosphate + H(+) = [pyruvate, water dikinase] + diphosphate. In terms of biological role, bifunctional serine/threonine kinase and phosphorylase involved in the regulation of the phosphoenolpyruvate synthase (PEPS) by catalyzing its phosphorylation/dephosphorylation. This Pseudomonas fluorescens (strain Pf0-1) protein is Putative phosphoenolpyruvate synthase regulatory protein.